Consider the following 198-residue polypeptide: Endonuclease V (198 aa).

Mg(2+)-binding residues include aspartate 38 and aspartate 101.

This sequence belongs to the endonuclease V family. Mg(2+) is required as a cofactor.

The protein resides in the cytoplasm. It catalyses the reaction Endonucleolytic cleavage at apurinic or apyrimidinic sites to products with a 5'-phosphate.. DNA repair enzyme involved in the repair of deaminated bases. Selectively cleaves double-stranded DNA at the second phosphodiester bond 3' to a deoxyinosine leaving behind the intact lesion on the nicked DNA. The sequence is that of Endonuclease V from Saccharolobus islandicus (strain M.16.4 / Kamchatka #3) (Sulfolobus islandicus).